The sequence spans 88 residues: Small ribosomal subunit protein bS20 (88 aa).

2 disordered regions span residues Met1–Lys25 and His68–Ala88.

It belongs to the bacterial ribosomal protein bS20 family.

Binds directly to 16S ribosomal RNA. The sequence is that of Small ribosomal subunit protein bS20 from Cutibacterium acnes (strain DSM 16379 / KPA171202) (Propionibacterium acnes).